Consider the following 350-residue polypeptide: Protein pelota homolog (350 aa).

Belongs to the eukaryotic release factor 1 family. Pelota subfamily. In terms of assembly, monomer. A divalent metal cation is required as a cofactor.

Its subcellular location is the cytoplasm. May function in recognizing stalled ribosomes, interact with stem-loop structures in stalled mRNA molecules, and effect endonucleolytic cleavage of the mRNA. May play a role in the release non-functional ribosomes and degradation of damaged mRNAs. Has endoribonuclease activity. In Methanosarcina barkeri (strain Fusaro / DSM 804), this protein is Protein pelota homolog.